The sequence spans 208 residues: Protein-L-isoaspartate O-methyltransferase (208 aa).

The active site involves Ser-59.

This sequence belongs to the methyltransferase superfamily. L-isoaspartyl/D-aspartyl protein methyltransferase family.

The protein resides in the cytoplasm. The catalysed reaction is [protein]-L-isoaspartate + S-adenosyl-L-methionine = [protein]-L-isoaspartate alpha-methyl ester + S-adenosyl-L-homocysteine. In terms of biological role, catalyzes the methyl esterification of L-isoaspartyl residues in peptides and proteins that result from spontaneous decomposition of normal L-aspartyl and L-asparaginyl residues. It plays a role in the repair and/or degradation of damaged proteins. The sequence is that of Protein-L-isoaspartate O-methyltransferase from Salmonella newport (strain SL254).